The sequence spans 152 residues: D-aminoacyl-tRNA deacylase 1 (152 aa).

Positions 140–141 (GP) match the Gly-cisPro motif, important for rejection of L-amino acids motif.

The protein belongs to the DTD family. In terms of assembly, homodimer.

The protein resides in the cytoplasm. It carries out the reaction glycyl-tRNA(Ala) + H2O = tRNA(Ala) + glycine + H(+). The enzyme catalyses a D-aminoacyl-tRNA + H2O = a tRNA + a D-alpha-amino acid + H(+). In terms of biological role, an aminoacyl-tRNA editing enzyme that deacylates mischarged D-aminoacyl-tRNAs. Hydrolyzes correctly charged, achiral, glycyl-tRNA(Gly). Deacylates mischarged D.melanogaster and E.coli glycyl-tRNA(Ala), protecting cells against glycine mischarging by AlaRS. Acts via tRNA-based rather than protein-based catalysis; rejects L-amino acids rather than detecting D-amino acids in the active site. By recycling D-aminoacyl-tRNA to D-amino acids and free tRNA molecules, this enzyme counteracts the toxicity associated with the formation of D-aminoacyl-tRNA entities in vivo and helps enforce protein L-homochirality. The polypeptide is D-aminoacyl-tRNA deacylase 1 (dtd1) (Leishmania major).